The primary structure comprises 219 residues: MVFWIAGAVGLAIAYLLGSTPSGYLAGKLIRGIDIREHGSKSTGATNVLRTLGKWPALVVLLVDVLKGVGAVVFARWFYSWFSTLSSGMPPTALDLQSLEPWAVCLTGLAVLLGHGRSVWLNFTGGKSVAAGLGVLLAMSWPVGLGAAMVFGVALAISRIVSLSSMLAALTAIALVCGLEQPLPYRLLVIAGGIYVIARHRTNIRRLLAGTEPRLGKVA.

Helical transmembrane passes span 1 to 21 (MVFWIAGAVGLAIAYLLGSTP), 55 to 75 (WPALVVLLVDVLKGVGAVVFA), 93 to 113 (ALDLQSLEPWAVCLTGLAVLL), 135 to 155 (VLLAMSWPVGLGAAMVFGVAL), and 160 to 180 (IVSLSSMLAALTAIALVCGLE).

Belongs to the PlsY family. Probably interacts with PlsX.

The protein resides in the cell inner membrane. It catalyses the reaction an acyl phosphate + sn-glycerol 3-phosphate = a 1-acyl-sn-glycero-3-phosphate + phosphate. It participates in lipid metabolism; phospholipid metabolism. Functionally, catalyzes the transfer of an acyl group from acyl-phosphate (acyl-PO(4)) to glycerol-3-phosphate (G3P) to form lysophosphatidic acid (LPA). This enzyme utilizes acyl-phosphate as fatty acyl donor, but not acyl-CoA or acyl-ACP. This is Glycerol-3-phosphate acyltransferase 2 from Rhizobium johnstonii (strain DSM 114642 / LMG 32736 / 3841) (Rhizobium leguminosarum bv. viciae).